Consider the following 351-residue polypeptide: Snurportin-1 (351 aa).

2 disordered regions span residues 1–66 and 294–322; these read MESS…QKGI and EQKK…EYDS. Residues 8–42 show a composition bias toward basic and acidic residues; sequence LYKKGLDIGEQQKQRQKELLKQQKLRRQQEQDDYR. A compositionally biased stretch (basic residues) spans 52–62; the sequence is PRKKSGKRSGH. The stretch at 274-330 forms a coiled coil; that stretch reads VLQYMDAFEQKLAEHRRTLKEQKKKVNEQKEDPHTMEAEEDVESDEYDSLKRVLDQQ. Basic and acidic residues predominate over residues 294-310; the sequence is EQKKKVNEQKEDPHTME. Acidic residues predominate over residues 311–320; that stretch reads AEEDVESDEY.

It belongs to the snurportin family. As to quaternary structure, interacts with components of the snRNP complex including SmB and Smn; these interactions are RNA-dependent. Interacts with importin-7 msk but not with importin subunit beta Fs(2)Ket; the interaction is RNA-dependent.

The protein resides in the nucleus. The protein localises to the cytoplasm. It localises to the U-body. It is found in the nucleus speckle. Its subcellular location is the cajal body. In terms of biological role, functions as an U snRNP-specific nuclear import adapter. Involved in the trimethylguanosine (m3G)-cap-dependent nuclear import of U snRNPs. Binds specifically to the terminal m3G-cap U snRNAs. This is Snurportin-1 from Drosophila melanogaster (Fruit fly).